We begin with the raw amino-acid sequence, 248 residues long: Large ribosomal subunit protein uL4 (248 aa).

Disordered stretches follow at residues glycine 48–arginine 96 and alanine 210–alanine 248. The segment covering aspartate 233 to alanine 248 has biased composition (basic and acidic residues).

Belongs to the universal ribosomal protein uL4 family. Part of the 50S ribosomal subunit.

Its function is as follows. One of the primary rRNA binding proteins, this protein initially binds near the 5'-end of the 23S rRNA. It is important during the early stages of 50S assembly. It makes multiple contacts with different domains of the 23S rRNA in the assembled 50S subunit and ribosome. Forms part of the polypeptide exit tunnel. The protein is Large ribosomal subunit protein uL4 of Tropheryma whipplei (strain Twist) (Whipple's bacillus).